The sequence spans 255 residues: F-box/SPRY domain-containing protein 1 (255 aa).

One can recognise an F-box domain in the interval 3–51 (DPVAALCNYNVLEVIFSYLELDDLSHCSQVCKSWYHFLNDENSDVWRWH). Residues 61–253 (LKSDLLSSVS…VSMVYLGTPL (193 aa)) enclose the B30.2/SPRY domain.

The protein belongs to the FBXO45/Fsn family. As to quaternary structure, component of an E3 ubiquitin ligase complex composed of hiw and Fsn.

The protein resides in the synapse. It participates in protein modification; protein ubiquitination. In terms of biological role, required in the presynaptic motoneuron to down-regulate the levels of wnd and restrain synaptic terminal growth at the neuromuscular junction (NMJ). The chain is F-box/SPRY domain-containing protein 1 from Drosophila simulans (Fruit fly).